We begin with the raw amino-acid sequence, 631 residues long: MEDADGLSFDFEGGLDSGPVQNTASVPVAPPENSSSAAVNVAPTYDHSSATVAGAGRGRSFRQTVCRHWLRGLCMKGDACGFLHQFDKARMPICRFFRLYGECREQDCVYKHTNEDIKECNMYKLGFCPNGPDCRYRHAKLPGPPPPVEEVLQKIQQLTTYNYGTNRLYQARNVAPQLQDRPQGQVPMQGQPQESGNLQQQQQQQPQQSQHQVSQTLIPNPADQTNRTSHPLPQGVNRYFVVKSNNRENFELSVQQGVWATQRSNEAKLNEAFDSVENVILIFSVNRTRHFQGCAKMTSRIGGYIGGGNWKHEHGTAQYGRNFSVKWLKLCELSFHKTRNLRNPYNENLPVKISRDCQELEPSVGEQLASLLYLEPDSELMAISIAAEAKREEEKAKGVNPESRAENPDIVPFEDNEEEEEEEDESEEEEESMAGGPQGRGRGRGIMWPPQMPLGRGIRPMPGMGGFPLGVMGPGDAFPYGPGGYNGMPDPFGMGPRPFGPYGPRFGGDFRGPVPGMMFPGRPPQQFPHGGYGMMGGGRGPHMGGMGNAPRGGRPMYYPPATSSARPGPSNRKTPERSDERGVSGDQQNQDASHDMEQFEVGNSLRNEESESEDEDEAPRRSRHGEGKKRR.

Positions 12–38 (EGGLDSGPVQNTASVPVAPPENSSSAA) are disordered. C3H1-type zinc fingers lie at residues 60 to 87 (SFRQTVCRHWLRGLCMKGDACGFLHQFD), 88 to 112 (KARMPICRFFRLYGECREQDCVYKH), and 114 to 141 (NEDIKECNMYKLGFCPNGPDCRYRHAKL). A disordered region spans residues 179 to 234 (QDRPQGQVPMQGQPQESGNLQQQQQQQPQQSQHQVSQTLIPNPADQTNRTSHPLPQ). Over residues 182–215 (PQGQVPMQGQPQESGNLQQQQQQQPQQSQHQVSQ) the composition is skewed to low complexity. Polar residues predominate over residues 216 to 231 (TLIPNPADQTNRTSHP). In terms of domain architecture, YTH spans 237–372 (NRYFVVKSNN…SVGEQLASLL (136 aa)). Basic and acidic residues predominate over residues 392–407 (EEEKAKGVNPESRAEN). Disordered stretches follow at residues 392 to 447 (EEEK…RGIM) and 541 to 631 (PHMG…KKRR). Residues 412-432 (PFEDNEEEEEEEDESEEEEES) show a composition bias toward acidic residues. The segment covering 573-583 (KTPERSDERGV) has biased composition (basic and acidic residues). A phosphoserine mark is found at Ser-610 and Ser-612. Basic residues predominate over residues 621-631 (RSRHGEGKKRR).

It belongs to the CPSF4/YTH1 family. In terms of assembly, component of the cleavage and polyadenylation specificity factor (CPSF) complex. Can form homodimers. Binds to calmodulin. Forms a complex with cleavage and polyadenylation specificity factor (CPSF) subunits CPSF73-I, CPSF73-II, CPSF100, CPSF160, CFIS2, FIPS3, FIPS5, PAPS2, PAPS3, CLPS3, PCFS1, PCFS4, CSTF50 and CSTF77. Expressed in seedlings, roots, leaves, siliques, stems and flowers.

It localises to the nucleus. It is found in the cytoplasm. Its activity is regulated as follows. Endonuclease activity is repressed by the N-terminal domain of FIPS5. Nuclease activity is inhibited by zinc (&gt;100 uM), cadmium in a progressive manner (50 percent activity at 1 mM Cd(2+)), and high salt levels (e.g. KCl or NaCl &gt;600 mM). Stimulated by ATP in the presence of Zn(2+), even at inhibitory zinc concentrations. Elevated temperatures prevent RNA-binding at 55 degrees Celsius, but endonuclease activity at 70 degrees Celsius. The sulfhydryl reagent dithiothreitol (DTT) inhibits both RNA-binding and nuclease activities. In terms of biological role, component of the cleavage and polyadenylation specificity factor (CPSF) complex that play a key role in pre-mRNA 3'-end formation. May interact with poly(A) polymerase and other factors to bring about cleavage and poly(A) addition. Mediates poly(A) site selection. Binds RNA in a calcium-dependent manner. Exhibits endonuclease activity with an ability to nick and degrade linear as well as circular single-stranded RNA that leaves RNA 3' ends with hydroxyl groups, thus mediating processing of the pre-mRNA as a prelude to the polyadenylation. Involved in the post-transcriptional control, probably via poly(A) addition, of the responses of plants to stress, especially genes mediating tolerance to oxidative stress. Plays a role in the regulation of salicylic acid (SA) production via the control of messenger RNA 3' end processing, thus being a key component of programmed cell death and plant immune responses required for resistance to virulent Pseudomonas syringae pv tomato DC3000 (Pst). The polypeptide is 30-kDa cleavage and polyadenylation specificity factor 30 (Arabidopsis thaliana (Mouse-ear cress)).